Consider the following 320-residue polypeptide: Lipoyl synthase (320 aa).

The segment at 9–31 (ANDARPRHPEKAHRPDQPIQRKP) is disordered. The span at 12-31 (ARPRHPEKAHRPDQPIQRKP) shows a compositional bias: basic and acidic residues. 7 residues coordinate [4Fe-4S] cluster: cysteine 60, cysteine 65, cysteine 71, cysteine 86, cysteine 90, cysteine 93, and serine 299. A Radical SAM core domain is found at 72–288 (WEKKHATFMI…ETTAYAKGFL (217 aa)).

The protein belongs to the radical SAM superfamily. Lipoyl synthase family. Requires [4Fe-4S] cluster as cofactor.

The protein localises to the cytoplasm. It carries out the reaction [[Fe-S] cluster scaffold protein carrying a second [4Fe-4S](2+) cluster] + N(6)-octanoyl-L-lysyl-[protein] + 2 oxidized [2Fe-2S]-[ferredoxin] + 2 S-adenosyl-L-methionine + 4 H(+) = [[Fe-S] cluster scaffold protein] + N(6)-[(R)-dihydrolipoyl]-L-lysyl-[protein] + 4 Fe(3+) + 2 hydrogen sulfide + 2 5'-deoxyadenosine + 2 L-methionine + 2 reduced [2Fe-2S]-[ferredoxin]. Its pathway is protein modification; protein lipoylation via endogenous pathway; protein N(6)-(lipoyl)lysine from octanoyl-[acyl-carrier-protein]: step 2/2. In terms of biological role, catalyzes the radical-mediated insertion of two sulfur atoms into the C-6 and C-8 positions of the octanoyl moiety bound to the lipoyl domains of lipoate-dependent enzymes, thereby converting the octanoylated domains into lipoylated derivatives. The protein is Lipoyl synthase of Methylobacterium nodulans (strain LMG 21967 / CNCM I-2342 / ORS 2060).